We begin with the raw amino-acid sequence, 1162 residues long: Transcription termination factor 2 (1162 aa).

Zn(2+) contacts are provided by Cys-6, His-9, Cys-32, and Cys-37. Residues 6–46 (CPEHGTFCFLKTGVRDGPNKGKSFYVCRADTCSFVRATDIP) form a GRF-type zinc finger. 4 disordered regions span residues 97–116 (PDSK…ETFH), 142–358 (IKGE…EEDD), 388–407 (DRSV…KVEP), and 459–503 (LSPE…TQPV). A compositionally biased stretch (polar residues) spans 105-116 (SNKSQHASETFH). Residues 142–178 (IKGEGEEKKADKKQREKGDQLFDQKKEQKPEMMEKDL) show a composition bias toward basic and acidic residues. A Glycyl lysine isopeptide (Lys-Gly) (interchain with G-Cter in SUMO2) cross-link involves residue Lys-143. Over residues 219–232 (IKSQQCQGNELTRP) the composition is skewed to polar residues. Over residues 233–245 (SASSQEKSSGKSQ) the composition is skewed to low complexity. Basic and acidic residues predominate over residues 246–258 (DVQRESEPLREKV). A compositionally biased stretch (polar residues) spans 261–274 (LLPQNVHSHNSISK). A compositionally biased stretch (low complexity) spans 323–338 (PAPGGPAAQAAPAAPG). Positions 459–485 (LSPEQGTNEKSNSQVPQQSHFTKTTTG) are enriched in polar residues. Ser-460 is subject to Phosphoserine. Residues 583 to 786 (WRESQKPQGG…YSLLKFLRCS (204 aa)) form the Helicase ATP-binding domain. An ATP-binding site is contributed by 596-603 (DDMGLGKT). The DEAH box motif lies at 737–740 (DEAH). Residues 871–890 (KRHESRGNQSGRSPNNPFSR) are disordered. A compositionally biased stretch (polar residues) spans 877-888 (GNQSGRSPNNPF). Phosphoserine occurs at positions 883 and 908. In terms of domain architecture, Helicase C-terminal spans 995–1157 (SLLAELEAIQ…VTKLTLADLR (163 aa)).

It belongs to the SNF2/RAD54 helicase family. In terms of assembly, interacts with CDC5L. Part of the spliceosome.

The protein localises to the cytoplasm. Its subcellular location is the nucleus. DsDNA-dependent ATPase which acts as a transcription termination factor by coupling ATP hydrolysis with removal of RNA polymerase II from the DNA template. May contribute to mitotic transcription repression. May also be involved in pre-mRNA splicing. The polypeptide is Transcription termination factor 2 (TTF2) (Homo sapiens (Human)).